A 260-amino-acid polypeptide reads, in one-letter code: Cytosolic Fe-S cluster assembly factor Nubp2 homolog (260 aa).

An ATP-binding site is contributed by 14 to 21 (GKGGVGKS). [4Fe-4S] cluster contacts are provided by Cys-188 and Cys-191.

Belongs to the Mrp/NBP35 ATP-binding proteins family. NUBP2/CFD1 subfamily. In terms of assembly, heterotetramer of 2 Nubp1 and 2 Nubp2 chains. It depends on [4Fe-4S] cluster as a cofactor.

Its subcellular location is the cytoplasm. Its function is as follows. Component of the cytosolic iron-sulfur (Fe/S) protein assembly (CIA) machinery. Required for maturation of extramitochondrial Fe-S proteins. The Nubp1-Nubp2 heterotetramer forms a Fe-S scaffold complex, mediating the de novo assembly of an Fe-S cluster and its transfer to target apoproteins. The polypeptide is Cytosolic Fe-S cluster assembly factor Nubp2 homolog (Drosophila erecta (Fruit fly)).